The chain runs to 298 residues: Cyclin-dependent kinase 2 (298 aa).

A Protein kinase domain is found at 4-286 (FQKVEKIGEG…AKNALVHRFF (283 aa)). ATP contacts are provided by residues 10–18 (IGEGTYGVV), K33, 81–83 (EFL), and D86. At T14 the chain carries Phosphothreonine. At Y15 the chain carries Phosphotyrosine. Catalysis depends on D127, which acts as the Proton acceptor. ATP-binding positions include 129–132 (KPQN) and D145. T160 carries the post-translational modification Phosphothreonine; by CAK.

This sequence belongs to the protein kinase superfamily. CMGC Ser/Thr protein kinase family. CDC2/CDKX subfamily.

The enzyme catalyses L-seryl-[protein] + ATP = O-phospho-L-seryl-[protein] + ADP + H(+). It carries out the reaction L-threonyl-[protein] + ATP = O-phospho-L-threonyl-[protein] + ADP + H(+). Phosphorylation at Thr-14 or Tyr-15 inactivates the enzyme, while phosphorylation at Thr-160 activates it. Functionally, serine/threonine-protein kinase involved in the control of the cell cycle; essential for meiosis, but dispensable for mitosis. Triggers duplication of centrosomes and DNA. Acts at the G1-S transition to promote the E2F transcriptional program and the initiation of DNA synthesis, and modulates G2 progression; controls the timing of entry into mitosis/meiosis by controlling the subsequent activation of cyclin B/CDK1 by phosphorylation, and coordinates the activation of cyclin B/CDK1 at the centrosome and in the nucleus. Crucial role in orchestrating a fine balance between cellular proliferation, cell death, and DNA repair in embryonic stem cells (ESCs). Activity of CDK2 is maximal during S phase and G2; activated by interaction with cyclin E during the early stages of DNA synthesis to permit G1-S transition, and subsequently activated by cyclin A2 (cyclin A1 in germ cells) during the late stages of DNA replication to drive the transition from S phase to mitosis, the G2 phase. The chain is Cyclin-dependent kinase 2 (cdk2) from Carassius auratus (Goldfish).